A 285-amino-acid polypeptide reads, in one-letter code: Shikimate dehydrogenase (NADP(+)) (285 aa).

Shikimate-binding positions include 22-24 (SMS) and Thr69. Residue Lys73 is the Proton acceptor of the active site. Asp85 lines the NADP(+) pocket. Shikimate contacts are provided by Asn94 and Asp110. NADP(+) contacts are provided by residues 136 to 140 (GAGGA), 160 to 165 (NRTVAR), and Met225. Residue Tyr227 participates in shikimate binding. Gly248 serves as a coordination point for NADP(+).

It belongs to the shikimate dehydrogenase family. In terms of assembly, homodimer.

It carries out the reaction shikimate + NADP(+) = 3-dehydroshikimate + NADPH + H(+). The protein operates within metabolic intermediate biosynthesis; chorismate biosynthesis; chorismate from D-erythrose 4-phosphate and phosphoenolpyruvate: step 4/7. Involved in the biosynthesis of the chorismate, which leads to the biosynthesis of aromatic amino acids. Catalyzes the reversible NADPH linked reduction of 3-dehydroshikimate (DHSA) to yield shikimate (SA). This chain is Shikimate dehydrogenase (NADP(+)), found in Caulobacter vibrioides (strain ATCC 19089 / CIP 103742 / CB 15) (Caulobacter crescentus).